The chain runs to 362 residues: tRNA-specific 2-thiouridylase MnmA (362 aa).

ATP is bound by residues 9–16 and Met35; that span reads GMSGGVDS. Residues 95–97 form an interaction with target base in tRNA region; the sequence is NPD. The Nucleophile role is filled by Cys100. Cys100 and Cys196 form a disulfide bridge. Gly124 serves as a coordination point for ATP. The interaction with tRNA stretch occupies residues 146–148; that stretch reads KDQ. Cys196 (cysteine persulfide intermediate) is an active-site residue. An interaction with tRNA region spans residues 308–309; that stretch reads RY.

The protein belongs to the MnmA/TRMU family.

The protein resides in the cytoplasm. The enzyme catalyses S-sulfanyl-L-cysteinyl-[protein] + uridine(34) in tRNA + AH2 + ATP = 2-thiouridine(34) in tRNA + L-cysteinyl-[protein] + A + AMP + diphosphate + H(+). Its function is as follows. Catalyzes the 2-thiolation of uridine at the wobble position (U34) of tRNA, leading to the formation of s(2)U34. This chain is tRNA-specific 2-thiouridylase MnmA, found in Nitrosomonas europaea (strain ATCC 19718 / CIP 103999 / KCTC 2705 / NBRC 14298).